The sequence spans 427 residues: Glutamate-1-semialdehyde 2,1-aminomutase (427 aa).

The residue at position 265 (Lys-265) is an N6-(pyridoxal phosphate)lysine.

Belongs to the class-III pyridoxal-phosphate-dependent aminotransferase family. HemL subfamily. Homodimer. It depends on pyridoxal 5'-phosphate as a cofactor.

The protein resides in the cytoplasm. The enzyme catalyses (S)-4-amino-5-oxopentanoate = 5-aminolevulinate. Its pathway is porphyrin-containing compound metabolism; protoporphyrin-IX biosynthesis; 5-aminolevulinate from L-glutamyl-tRNA(Glu): step 2/2. This Idiomarina loihiensis (strain ATCC BAA-735 / DSM 15497 / L2-TR) protein is Glutamate-1-semialdehyde 2,1-aminomutase.